A 137-amino-acid polypeptide reads, in one-letter code: Putative pre-16S rRNA nuclease (137 aa).

Belongs to the YqgF nuclease family.

Its subcellular location is the cytoplasm. Functionally, could be a nuclease involved in processing of the 5'-end of pre-16S rRNA. This chain is Putative pre-16S rRNA nuclease, found in Clostridium botulinum (strain 657 / Type Ba4).